Reading from the N-terminus, the 362-residue chain is Homeobox-leucine zipper protein HOX11 (362 aa).

Basic and acidic residues predominate over residues 27 to 45 (REEAAEAGRRDHEVRRELE). The interval 27–179 (REEAAEAGRR…DDGGSARKKL (153 aa)) is disordered. Over residues 64–75 (LTLLPMVPGLGL) the composition is skewed to low complexity. Polar residues predominate over residues 126–135 (LSSSPNNSAG). Positions 145–160 (HGLGGNDAAPGGGGGD) are enriched in gly residues. The segment at residues 174–233 (SARKKLRLSKEQSAFLEESFKEHSTLNPKQKLALAKQLNLRPRQVEVWFQNRRARTKLKQ) is a DNA-binding region (homeobox). The leucine-zipper stretch occupies residues 232–276 (KQTEVDCEYLKRCCETLTEENRRLQKELAELRALKTVHPFYMHLP). A disordered region spans residues 301–330 (AATSSTAAPPAAPSSGGIAATSSSAAAAAA).

This sequence belongs to the HD-ZIP homeobox family. Class II subfamily. As to expression, expressed in stems, leaf sheaths and blades and panicles.

It is found in the nucleus. Its function is as follows. Probable transcription factor. This is Homeobox-leucine zipper protein HOX11 (HOX11) from Oryza sativa subsp. japonica (Rice).